We begin with the raw amino-acid sequence, 572 residues long: Hemagglutinin-neuraminidase (572 aa).

Over 1–31 (MEYWKHTNHRKDAGNELETSMATHGNKLTNK) the chain is Intravirion. A helical transmembrane segment spans residues 32 to 52 (ITYILWTIILVLLSIVLIIVL). Residues 53-572 (INSIKSEKAH…FKTEVPKSCS (520 aa)) are Virion surface-facing. Intrachain disulfides connect Cys190–Cys214 and Cys256–Cys269. Residues 252–257 (NRKSCS) form an involved in neuraminidase activity region. Residues Asn308 and Asn351 are each glycosylated (N-linked (GlcNAc...) asparagine; by host). 2 disulfide bridges follow: Cys355/Cys469 and Cys463/Cys473. N-linked (GlcNAc...) asparagine; by host glycosylation occurs at Asn523. A disulfide bridge links Cys535 with Cys544.

Belongs to the paramyxoviruses hemagglutinin-neuraminidase family. As to quaternary structure, homotetramer; composed of disulfide-linked homodimers. Interacts with F protein trimer.

It localises to the virion membrane. The protein localises to the host cell membrane. The enzyme catalyses Hydrolysis of alpha-(2-&gt;3)-, alpha-(2-&gt;6)-, alpha-(2-&gt;8)- glycosidic linkages of terminal sialic acid residues in oligosaccharides, glycoproteins, glycolipids, colominic acid and synthetic substrates.. Attaches the virus to sialic acid-containing cell receptors and thereby initiating infection. Binding of HN protein to the receptor induces a conformational change that allows the F protein to trigger virion/cell membranes fusion. Its function is as follows. Neuraminidase activity ensures the efficient spread of the virus by dissociating the mature virions from the neuraminic acid containing glycoproteins. The sequence is that of Hemagglutinin-neuraminidase (HN) from Human parainfluenza 3 virus (strain Tex/9305/82) (HPIV-3).